The following is an 82-amino-acid chain: Penaeidin-3a (82 aa).

An N-terminal signal peptide occupies residues 1 to 19 (MRLVVCLVFLASFALVCQG). Gln-20 is modified (pyrrolidone carboxylic acid). 3 cysteine pairs are disulfide-bonded: Cys-51–Cys-66, Cys-55–Cys-73, and Cys-67–Cys-74. Ser-81 bears the Serine amide mark.

In terms of processing, the N-terminus forms pyrrolidone carboxylic acid. As to expression, higher expression in hemocytes and to a lesser extent in heart, testis, gills, intestine, lymphoid organ and hepatopancreas. Traces in eyes and subcuticular epithelium. Not present in the brain.

The protein localises to the cytoplasmic granule. Functionally, antibacterial activity against M.luteus and E.coli bacteria. Antifungal activity against N.crassa and F.oxysporum. Presents chitin-binding activity. The chain is Penaeidin-3a from Penaeus vannamei (Whiteleg shrimp).